Here is a 558-residue protein sequence, read N- to C-terminus: Urease subunit alpha 2 (558 aa).

Residues 129 to 558 (GAVDTHVHLL…SVSLNRLYFL (430 aa)) form the Urease domain. Residues His-134, His-136, and Lys-214 each coordinate Ni(2+). Lys-214 is subject to N6-carboxylysine. His-216 provides a ligand contact to substrate. Residues His-243 and His-269 each contribute to the Ni(2+) site. The active-site Proton donor is His-317. Asp-357 contacts Ni(2+).

This sequence belongs to the metallo-dependent hydrolases superfamily. Urease alpha subunit family. As to quaternary structure, may form a heterohexamer of 3 UreC (alpha) and 3 UreAB (gamma/beta) subunits. May also form a heterotrimer of UreA (gamma), UreB (beta) and UreC (alpha) subunits. Three heterotrimers associate to form the active enzyme. The cofactor is Ni cation. Carboxylation allows a single lysine to coordinate two nickel ions.

The protein resides in the cytoplasm. The catalysed reaction is urea + 2 H2O + H(+) = hydrogencarbonate + 2 NH4(+). Its pathway is nitrogen metabolism; urea degradation; CO(2) and NH(3) from urea (urease route): step 1/1. In Streptomyces coelicolor (strain ATCC BAA-471 / A3(2) / M145), this protein is Urease subunit alpha 2.